Consider the following 286-residue polypeptide: Homoserine kinase (286 aa).

An ATP-binding site is contributed by 78–88; sequence PLARGLGSSSS.

It belongs to the GHMP kinase family. Homoserine kinase subfamily.

Its subcellular location is the cytoplasm. The enzyme catalyses L-homoserine + ATP = O-phospho-L-homoserine + ADP + H(+). Its pathway is amino-acid biosynthesis; L-threonine biosynthesis; L-threonine from L-aspartate: step 4/5. Catalyzes the ATP-dependent phosphorylation of L-homoserine to L-homoserine phosphate. The polypeptide is Homoserine kinase (Streptococcus equi subsp. zooepidemicus (strain H70)).